The chain runs to 419 residues: MTSTDVSSGVSNCYVFKSRLQEYAQKYKLPTPVYEIVKEGPSHKSLFQSTVILDGVRYNSLPGFFNRKAAEQSAAEVALRELAKSSELSQCVSQPVHETGLCKNLLQEYAQKMNYAIPLYQCQKVETLGRVTQFTCTVEIGGIKYTGAATRTKKDAEISAGRTALLAIQSDTKNNLANYNTQLTVLPCEKKTIQAAIPLKETVKTLKARKAQFKKKAQKGKRTVAKNPEDIIIPPQPTDHCQNDQSEKIETTPNLEPSSCMNGLKEAAFGSVETEKIETTPNLEPPSCMNGLKEAAFGSVETEKIETTPNLEPPSCMNGLKEAAFGSVETEKIETTPNLEPSSCMNGLKEAAFGSVETEKIETTPNLEPPSCMNGLKEAAFGSVETEKIETTPNLESSSCMSGLKEAAFGSVETEASHA.

DRBM domains are found at residues 15 to 84 (VFKS…ELAK) and 101 to 170 (LCKN…AIQS). A Bipartite nuclear localization motif is present at residues 207-222 (KARKAQFKKKAQKGKR). 6 repeat units span residues 247–274 (EKIE…SVET), 275–302 (EKIE…SVET), 303–330 (EKIE…SVET), 331–358 (EKIE…SVET), 359–386 (EKIE…SVET), and 387–414 (EKIE…SVET). A 6 X 28 AA repeats of E-K-I-E-T-T-P-N-L-E-[PS]-[PS]-S-C-M-[NS]-G-L-K-E-A-A-F-G-S-V-E-T region spans residues 247-414 (EKIETTPNLE…KEAAFGSVET (168 aa)).

In terms of assembly, homodimer. Heterodimer with DRB2, DRB4 or DRB5. Interacts with SE and DCL1. Interacts with RCF3, RS40 and RS41. As to expression, expressed in rosette and cauline leaves, stems, roots, flowers and siliques.

It is found in the nucleus. The protein localises to the nucleus speckle. Functionally, double-stranded RNA-binding protein involved in RNA-mediated post-transcriptional gene silencing (PTGS). Functions in the microRNAs (miRNAs) biogenesis by assisting DICER-LIKE 1 (DCL1) in the accurate processing from primary miRNAs (pri-miRNAs) to miRNAs in the nucleus. Forms a complex with SERRATE (SE) and DCL1 to promote accurate processing of pri-miRNAs by DCL1. Binds and assist DCL1 for accurate processing of precursor miRNAs (pre-miRNA). Indirectly involved in the production of trans-acting small interfering RNAs (ta-siRNAs) derived from the TAS1, TAS2 or TAS3 endogenous transcripts by participating in the production of their initiating miRNAs. Involved with argonaute 1 (AGO1) in the guide strand selection from miRNA duplexes, presumably by directional loading of the miRNA duplex (guide stand and passenger strand) onto the RNA-induced silencing complex (RISC) for passenger strand degradation. Does not participate in sense transgene-induced post-transcriptional gene silencing (S-PTGS). Involved in several plant development aspects and response to hormones through its role in miRNAs processing. In Arabidopsis thaliana (Mouse-ear cress), this protein is Double-stranded RNA-binding protein 1 (DRB1).